A 174-amino-acid polypeptide reads, in one-letter code: Translationally-controlled tumor protein homolog 1 (174 aa).

Positions 1 to 174 (MRVFKDIVGY…FKDGLESVKY (174 aa)) constitute a TCTP domain.

Belongs to the TCTP family.

Its subcellular location is the cytoplasm. Its function is as follows. Involved in calcium binding and microtubule stabilization. The chain is Translationally-controlled tumor protein homolog 1 from Dictyostelium discoideum (Social amoeba).